The chain runs to 162 residues: Phosphopantetheine adenylyltransferase (162 aa).

Thr10 contacts substrate. Residues 10 to 11 and His18 contribute to the ATP site; that span reads TF. Positions 42, 74, and 88 each coordinate substrate. ATP is bound by residues 89–91, Glu99, and 124–130; these read GLR and FSCISST.

It belongs to the bacterial CoaD family. In terms of assembly, homohexamer. Mg(2+) serves as cofactor.

The protein localises to the cytoplasm. It catalyses the reaction (R)-4'-phosphopantetheine + ATP + H(+) = 3'-dephospho-CoA + diphosphate. It participates in cofactor biosynthesis; coenzyme A biosynthesis; CoA from (R)-pantothenate: step 4/5. Reversibly transfers an adenylyl group from ATP to 4'-phosphopantetheine, yielding dephospho-CoA (dPCoA) and pyrophosphate. The polypeptide is Phosphopantetheine adenylyltransferase (Francisella tularensis subsp. mediasiatica (strain FSC147)).